Consider the following 639-residue polypeptide: Signal recognition particle receptor subunit alpha (639 aa).

The segment at 132–317 (APTTMKKFED…STKPSATKGT (186 aa)) is disordered. Basic and acidic residues-rich tracts occupy residues 137 to 146 (KKFEDSEKAK) and 153 to 165 (IETR…EKAK). Ser178 carries the post-translational modification Phosphoserine. Over residues 204–240 (ELSKEEQIRRKREEFIQKHGRGMEKSSKSSKSDAPKE) the composition is skewed to basic and acidic residues. A Phosphothreonine modification is found at Thr285. Phosphoserine is present on residues Ser297, Ser298, and Ser299. The segment covering 305-315 (AQNSTKPSATK) has biased composition (polar residues). The interval 420-637 (YVVTFCGVNG…NAKAVVAALM (218 aa)) is NG domain. 426 to 433 (GVNGVGKS) serves as a coordination point for GTP. Residue Ser474 is modified to Phosphoserine. Residue 521-525 (DTAGR) participates in GTP binding. Thr579 is modified (phosphothreonine). 589–592 (TKFD) serves as a coordination point for GTP.

This sequence belongs to the GTP-binding SRP family. As to quaternary structure, heterodimer with SRPRB. Interacts with the signal recognition particle (SRP) complex subunit SRP54.

The protein resides in the endoplasmic reticulum membrane. Functionally, component of the SRP (signal recognition particle) receptor. Ensures, in conjunction with the signal recognition particle, the correct targeting of the nascent secretory proteins to the endoplasmic reticulum membrane system. Forms a guanosine 5'-triphosphate (GTP)-dependent complex with the SRP subunit SRP54. SRP receptor compaction and GTPase rearrangement drive SRP-mediated cotranslational protein translocation into the ER. In Bos taurus (Bovine), this protein is Signal recognition particle receptor subunit alpha.